A 509-amino-acid chain; its full sequence is ATP synthase subunit alpha (509 aa).

169 to 176 provides a ligand contact to ATP; the sequence is GDRQTGKT.

The protein belongs to the ATPase alpha/beta chains family. F-type ATPases have 2 components, CF(1) - the catalytic core - and CF(0) - the membrane proton channel. CF(1) has five subunits: alpha(3), beta(3), gamma(1), delta(1), epsilon(1). CF(0) has four main subunits: a(1), b(1), b'(1) and c(9-12).

It localises to the cell inner membrane. It catalyses the reaction ATP + H2O + 4 H(+)(in) = ADP + phosphate + 5 H(+)(out). In terms of biological role, produces ATP from ADP in the presence of a proton gradient across the membrane. The alpha chain is a regulatory subunit. This Erythrobacter litoralis (strain HTCC2594) protein is ATP synthase subunit alpha.